We begin with the raw amino-acid sequence, 956 residues long: Matrilin-2 (956 aa).

A signal peptide spans 1 to 23; sequence MEKMLVGCLLMLGQLFLVLPVDG. The VWFA 1 domain occupies 57 to 232; sequence DLVFIIDSSR…SQIESLTSVF (176 aa). A glycan (N-linked (GlcNAc...) asparagine) is linked at asparagine 221. EGF-like domains follow at residues 238-278, 279-319, 320-360, 361-401, 402-442, 443-483, 484-524, 525-565, 566-606, and 607-647; these read TVHM…KTCR, IQDL…KRCT, AVDY…KTCS, KIDY…KTCR, RINY…KTCS, RVDH…KTCS, RADY…KTCA, KLDS…KTCR, RKDV…KRCR, and RKNV…KHCK. Cystine bridges form between cysteine 242-cysteine 253, cysteine 249-cysteine 262, cysteine 264-cysteine 277, cysteine 283-cysteine 294, cysteine 290-cysteine 303, cysteine 305-cysteine 318, cysteine 324-cysteine 335, cysteine 331-cysteine 344, cysteine 346-cysteine 359, cysteine 365-cysteine 376, cysteine 372-cysteine 385, cysteine 387-cysteine 400, cysteine 406-cysteine 417, cysteine 413-cysteine 426, cysteine 428-cysteine 441, cysteine 447-cysteine 458, cysteine 454-cysteine 467, cysteine 469-cysteine 482, cysteine 488-cysteine 499, cysteine 495-cysteine 508, cysteine 510-cysteine 523, cysteine 529-cysteine 540, cysteine 536-cysteine 549, cysteine 551-cysteine 564, cysteine 570-cysteine 581, cysteine 577-cysteine 590, cysteine 592-cysteine 605, cysteine 611-cysteine 622, cysteine 618-cysteine 631, and cysteine 633-cysteine 646. In terms of domain architecture, VWFA 2 spans 655 to 830; it reads DLVFVIDGSK…STMGEISEKL (176 aa). N-linked (GlcNAc...) asparagine glycosylation occurs at asparagine 890. A coiled-coil region spans residues 917–955; sequence KCENLILFQNVANEEVRKLTQRLEEMTQRMEALENRLKY.

As to expression, detected in a variety of organs, including calvaria, uterus, heart and brain, as well as fibroblast and osteoblast cell lines.

It localises to the secreted. Functionally, involved in matrix assembly. The sequence is that of Matrilin-2 (Matn2) from Mus musculus (Mouse).